The following is a 459-amino-acid chain: Cysteine--tRNA ligase (459 aa).

Residue C28 participates in Zn(2+) binding. A 'HIGH' region motif is present at residues 30 to 40 (VTIYDLCHIGH). Residues C209, H234, and E238 each coordinate Zn(2+). The short motif at 266–270 (KMSKS) is the 'KMSKS' region element. K269 is a binding site for ATP.

Belongs to the class-I aminoacyl-tRNA synthetase family. In terms of assembly, monomer. It depends on Zn(2+) as a cofactor.

It is found in the cytoplasm. The catalysed reaction is tRNA(Cys) + L-cysteine + ATP = L-cysteinyl-tRNA(Cys) + AMP + diphosphate. The sequence is that of Cysteine--tRNA ligase from Shewanella amazonensis (strain ATCC BAA-1098 / SB2B).